Here is a 67-residue protein sequence, read N- to C-terminus: Large ribosomal subunit protein bL35 (67 aa).

The protein belongs to the bacterial ribosomal protein bL35 family.

This is Large ribosomal subunit protein bL35 from Dehalococcoides mccartyi (strain ATCC BAA-2266 / KCTC 15142 / 195) (Dehalococcoides ethenogenes (strain 195)).